A 215-amino-acid polypeptide reads, in one-letter code: Flavin-dependent thymidylate synthase (215 aa).

The ThyX domain occupies 1 to 215 (MDVRFISLTK…FPTVAAALEW (215 aa)). FAD-binding positions include serine 56, 79 to 81 (RHR), and glutamate 87. Residues 76–79 (QILR), 87–91 (EFSLR), and arginine 155 each bind dUMP. The ThyX motif motif lies at 79–89 (RHRSFSFQEFS). Histidine 177 serves as a coordination point for FAD. Arginine 182 serves as a coordination point for dUMP. Residue arginine 182 is the Involved in ionization of N3 of dUMP, leading to its activation of the active site.

Belongs to the thymidylate synthase ThyX family. Homotetramer. It depends on FAD as a cofactor.

The enzyme catalyses dUMP + (6R)-5,10-methylene-5,6,7,8-tetrahydrofolate + NADPH + H(+) = dTMP + (6S)-5,6,7,8-tetrahydrofolate + NADP(+). The protein operates within pyrimidine metabolism; dTTP biosynthesis. Functionally, catalyzes the reductive methylation of 2'-deoxyuridine-5'-monophosphate (dUMP) to 2'-deoxythymidine-5'-monophosphate (dTMP) while utilizing 5,10-methylenetetrahydrofolate (mTHF) as the methyl donor, and NADPH and FADH(2) as the reductant. The sequence is that of Flavin-dependent thymidylate synthase from Synechocystis sp. (strain ATCC 27184 / PCC 6803 / Kazusa).